The chain runs to 133 residues: Putative biopolymer transport protein ExbD-like 1 (133 aa).

Residues 1-15 (MNYDNYWDEDKPELN) are Cytoplasmic-facing. The chain crosses the membrane as a helical span at residues 16–32 (ITPLVDVMLVLLAILMV). Over 33–133 (TTPTLTYKEE…FLKVSLITSP (101 aa)) the chain is Periplasmic.

The protein belongs to the ExbD/TolR family.

The protein localises to the cell inner membrane. The sequence is that of Putative biopolymer transport protein ExbD-like 1 from Helicobacter pylori (strain J99 / ATCC 700824) (Campylobacter pylori J99).